Here is a 417-residue protein sequence, read N- to C-terminus: MSMNFVTFNQDYSYLAVGTSKGFRIFTTDPFGKSYETKEGNIAILEMLFSTSLVAVILSPRRLQIMNTKRQSVICELTFPTTVLAIRLNRKRLVIVLEDQIYIYDIQTMKLVYTIETSPNPNAICALAPSSDNCYLAYPLPQKAPPPSFSPPSHGPPSNTHIPPTSGEVLIFDAYKLEAVNVVEAHKSPLSFLALNSEGTLLATASDKGTIIRVFSVPAAHKLYQFRRGSMPSRIYSMSFNITSTLLCVSSATETIHIFKLGQQQGLSKTSSPSRKLESSRGSGDESAVESASSEMSSRKHNGTFMGMIRRTSQNVGNSFAATVGGYLPKGVTEMWEPERDFAWIKLPKSNGGNGGSGPVRSVVAMSSNTPQVMVVTSEGNFYVFNIDLSKGGEGTLVKQYSVLDSSDRMGSTDLDY.

WD repeat units lie at residues 1–36 (MSMN…KSYE), 76–114 (ELTF…LVYT), 185–225 (AHKS…KLYQ), and 230–269 (SMPS…GLSK). The L/FRRG motif motif lies at 226–230 (FRRGS). The interval 267–300 (LSKTSSPSRKLESSRGSGDESAVESASSEMSSRK) is disordered. The segment covering 285 to 296 (DESAVESASSEM) has biased composition (low complexity). WD repeat units follow at residues 300 to 346 (KHNG…AWIK) and 355 to 395 (GGSG…GGEG).

This sequence belongs to the WD repeat PROPPIN family. Component of the PI(3,5)P2 regulatory complex.

It is found in the preautophagosomal structure membrane. It localises to the vacuole membrane. The protein localises to the endosome membrane. Functionally, the PI(3,5)P2 regulatory complex regulates both the synthesis and turnover of phosphatidylinositol 3,5-bisphosphate (PtdIns(3,5)P2). Necessary for proper vacuole morphology. Plays an important role in osmotically-induced vacuole fragmentation. Required for cytoplasm to vacuole transport (Cvt) vesicle formation, pexophagy and starvation-induced autophagy. Involved in correct ATG9 trafficking to the pre-autophagosomal structure. Might also be involved in premeiotic DNA replication. The protein is Autophagy-related protein 18 (ATG18) of Coccidioides immitis (strain RS) (Valley fever fungus).